The chain runs to 326 residues: Mitochondrial glycine transporter (326 aa).

Solcar repeat units lie at residues 45 to 134, 141 to 225, and 237 to 321; these read HPVI…SKQY, PTAL…TRAT, and LMPL…MMAK. Helical transmembrane passes span 51–76, 109–135, 147–172, 200–223, 241–267, and 296–314; these read FLCG…TRLQ, GMSP…KQYF, VILG…TRYE, GLTA…SQTR, VNFS…KTHM, and GSVP…AWTV.

The protein belongs to the mitochondrial carrier (TC 2.A.29) family. SLC25A38 subfamily.

Its subcellular location is the mitochondrion inner membrane. It catalyses the reaction glycine(in) = glycine(out). Its function is as follows. Mitochondrial glycine transporter that imports glycine into the mitochondrial matrix. Plays an important role in providing glycine for the first enzymatic step in heme biosynthesis, the condensation of glycine with succinyl-CoA to produce 5-aminolevulinate (ALA) in the mitochondrial matrix. Required during erythropoiesis. Plays a role as pro-apoptotic protein that induces caspase-dependent apoptosis. This chain is Mitochondrial glycine transporter, found in Rattus norvegicus (Rat).